Consider the following 238-residue polypeptide: Large ribosomal subunit protein uL2 (238 aa).

Residues 201 to 238 form a disordered region; that stretch reads FGGGGHQHPGRPKTIARGTSPGRTVGHVAARQTGRSRK.

The protein belongs to the universal ribosomal protein uL2 family. In terms of assembly, part of the 50S ribosomal subunit. Forms a bridge to the 30S subunit in the 70S ribosome.

One of the primary rRNA binding proteins. Required for association of the 30S and 50S subunits to form the 70S ribosome, for tRNA binding and peptide bond formation. It has been suggested to have peptidyltransferase activity; this is somewhat controversial. Makes several contacts with the 16S rRNA in the 70S ribosome. This Methanoregula boonei (strain DSM 21154 / JCM 14090 / 6A8) protein is Large ribosomal subunit protein uL2.